The sequence spans 481 residues: Glutamate--tRNA ligase (481 aa).

Residues 9-19 (PSPTGNLHIGT) carry the 'HIGH' region motif. Cys-98, Cys-100, His-125, and Asp-127 together coordinate Zn(2+). Residues 248-252 (KLSKR) carry the 'KMSKS' region motif. Lys-251 is a binding site for ATP.

It belongs to the class-I aminoacyl-tRNA synthetase family. Glutamate--tRNA ligase type 1 subfamily. As to quaternary structure, monomer. Requires Zn(2+) as cofactor.

Its subcellular location is the cytoplasm. It carries out the reaction tRNA(Glu) + L-glutamate + ATP = L-glutamyl-tRNA(Glu) + AMP + diphosphate. Its function is as follows. Catalyzes the attachment of glutamate to tRNA(Glu) in a two-step reaction: glutamate is first activated by ATP to form Glu-AMP and then transferred to the acceptor end of tRNA(Glu). This is Glutamate--tRNA ligase from Synechococcus elongatus (strain ATCC 33912 / PCC 7942 / FACHB-805) (Anacystis nidulans R2).